Here is a 512-residue protein sequence, read N- to C-terminus: Centrosomal protein CCDC61 (512 aa).

At Met-1 the chain carries N-acetylmethionine. The head domain stretch occupies residues 1-142 (MEQPAGLQVD…PLPLPYQGKP (142 aa)). Coiled coils occupy residues 176–203 (WHLREQVTRLASEKRELEAQLGRSREEA) and 246–273 (RRLAKELEEVKASERNLRARLKTLNCEL). Thr-282 bears the Phosphothreonine mark. 2 disordered regions span residues 282-415 (TLPA…SFRS) and 430-472 (SQSV…HLAS). The span at 287 to 300 (AREDRALSSRERST) shows a compositional bias: basic and acidic residues. A phosphoserine mark is found at Ser-328, Ser-330, Ser-372, and Ser-375. Low complexity predominate over residues 406 to 415 (RSSSVDSFRS). Ser-447 and Ser-473 each carry phosphoserine.

Belongs to the CCDC61 family. In terms of assembly, forms homodimers (via head domain). Interacts with CEP170. Interacts with PCM1 and CEP131. Binds tubulin.

It is found in the cytoplasm. The protein resides in the cytoskeleton. It localises to the microtubule organizing center. The protein localises to the centrosome. Its subcellular location is the centriolar satellite. It is found in the cilium basal body. Functionally, microtubule-binding centrosomal protein required for centriole cohesion, independently of the centrosome-associated protein/CEP250 and rootletin/CROCC linker. In interphase, required for anchoring microtubule at the mother centriole subdistal appendages and for centrosome positioning. During mitosis, may be involved in spindle assembly and chromatin alignment by regulating the organization of spindle microtubules into a symmetrical structure. Plays a non-essential role in ciliogenesis. This chain is Centrosomal protein CCDC61, found in Rattus norvegicus (Rat).